We begin with the raw amino-acid sequence, 199 residues long: Imidazoleglycerol-phosphate dehydratase (199 aa).

This sequence belongs to the imidazoleglycerol-phosphate dehydratase family.

It localises to the cytoplasm. The catalysed reaction is D-erythro-1-(imidazol-4-yl)glycerol 3-phosphate = 3-(imidazol-4-yl)-2-oxopropyl phosphate + H2O. The protein operates within amino-acid biosynthesis; L-histidine biosynthesis; L-histidine from 5-phospho-alpha-D-ribose 1-diphosphate: step 6/9. The sequence is that of Imidazoleglycerol-phosphate dehydratase from Methylibium petroleiphilum (strain ATCC BAA-1232 / LMG 22953 / PM1).